The chain runs to 934 residues: Aconitate hydratase A (934 aa).

Residues Glu398–Asn454 are disordered. The segment covering Leu404–Glu420 has biased composition (basic and acidic residues). Low complexity predominate over residues Ser427–Ser445. 3 residues coordinate [4Fe-4S] cluster: Cys473, Cys539, and Cys542.

The protein belongs to the aconitase/IPM isomerase family. Monomer. [4Fe-4S] cluster is required as a cofactor.

The enzyme catalyses citrate = D-threo-isocitrate. It carries out the reaction (2S,3R)-3-hydroxybutane-1,2,3-tricarboxylate = 2-methyl-cis-aconitate + H2O. It functions in the pathway carbohydrate metabolism; tricarboxylic acid cycle; isocitrate from oxaloacetate: step 2/2. The protein operates within organic acid metabolism; propanoate degradation. Its function is as follows. Involved in the catabolism of short chain fatty acids (SCFA) via the tricarboxylic acid (TCA)(acetyl degradation route) and probably via the 2-methylcitrate cycle I (propionate degradation route). Catalyzes the reversible isomerization of citrate to isocitrate via cis-aconitate. Could catalyze the hydration of 2-methyl-cis-aconitate to yield (2R,3S)-2-methylisocitrate. The apo form of AcnA functions as a RNA-binding regulatory protein. This is Aconitate hydratase A (acn) from Corynebacterium diphtheriae (strain ATCC 700971 / NCTC 13129 / Biotype gravis).